Reading from the N-terminus, the 288-residue chain is NAD(P)H-hydrate epimerase (288 aa).

The transit peptide at 1–47 (MSRLRALLGLGLLVAGSRVPRIKSQTIACRSGPTWWGPQRLNSGGRW) directs the protein to the mitochondrion. Phosphoserine is present on Ser-49. A YjeF N-terminal domain is found at 65–275 (AQAVDQELFN…ALEKKYQLNL (211 aa)). 119–123 (NNGGD) is a (6S)-NADPHX binding site. Residue Asn-120 participates in K(+) binding. An N6-succinyllysine modification is found at Lys-144. Asp-185 is a K(+) binding site. Residues 189–195 (GFSFKGD) and Asp-218 each bind (6S)-NADPHX. Ser-221 contacts K(+).

It belongs to the NnrE/AIBP family. In terms of assembly, homodimer. Interacts with APOA1 and APOA2. The cofactor is K(+). Undergoes physiological phosphorylation during sperm capacitation, downstream to PKA activation. Ubiquitously expressed, with highest levels in kidney, heart and liver. Present in cerebrospinal fluid and urine but not in serum from healthy patients. Present in serum of sepsis patients (at protein level).

Its subcellular location is the mitochondrion. The protein localises to the secreted. The catalysed reaction is (6R)-NADHX = (6S)-NADHX. It carries out the reaction (6R)-NADPHX = (6S)-NADPHX. Catalyzes the epimerization of the S- and R-forms of NAD(P)HX, a damaged form of NAD(P)H that is a result of enzymatic or heat-dependent hydration. This is a prerequisite for the S-specific NAD(P)H-hydrate dehydratase to allow the repair of both epimers of NAD(P)HX. Accelerates cholesterol efflux from endothelial cells to high-density lipoprotein (HDL) and thereby regulates angiogenesis. The polypeptide is NAD(P)H-hydrate epimerase (Homo sapiens (Human)).